The chain runs to 225 residues: Uracil phosphoribosyltransferase (225 aa).

36–40 lines the GTP pocket; the sequence is KGLVR. Residues Arg86, Arg111, and 145–153 each bind 5-phospho-alpha-D-ribose 1-diphosphate; that span reads DPMLATGST. Uracil-binding positions include Ile210 and 215-217; that span reads GDA. Asp216 contributes to the 5-phospho-alpha-D-ribose 1-diphosphate binding site.

Belongs to the UPRTase family. The cofactor is Mg(2+).

It catalyses the reaction UMP + diphosphate = 5-phospho-alpha-D-ribose 1-diphosphate + uracil. It participates in pyrimidine metabolism; UMP biosynthesis via salvage pathway; UMP from uracil: step 1/1. With respect to regulation, allosterically activated by GTP. In terms of biological role, catalyzes the conversion of uracil and 5-phospho-alpha-D-ribose 1-diphosphate (PRPP) to UMP and diphosphate. The sequence is that of Uracil phosphoribosyltransferase from Haloarcula marismortui (strain ATCC 43049 / DSM 3752 / JCM 8966 / VKM B-1809) (Halobacterium marismortui).